Here is a 236-residue protein sequence, read N- to C-terminus: MFMTKDLFFVYIFTTMIKLVVLDVDGTLTDKSRMISVNAVNAIRNLKTKVALVSGNVLPVLYGLKIYIGFDGYIFAENGGIALINNNIEKFFEKDGPESFLNDISGYTSARGILTNRWRETSMAFTANHDEMDIIDREAASRDLYIVDSGFTLHILNKGQDKGFAVKKMIDIMNIDYNNVLVIGDSQNDESMFSLGTLSACPGNASEKIKEMSNYVSGKCYGDELFDVFRHFDLIH.

Catalysis depends on aspartate 23, which acts as the Nucleophile. Mg(2+)-binding residues include aspartate 23 and aspartate 25. A substrate-binding site is contributed by lysine 162. Aspartate 185 and aspartate 189 together coordinate Mg(2+).

Belongs to the archaeal SPP-like hydrolase family. Mg(2+) serves as cofactor.

It catalyses the reaction 2-phosphoglycolate + H2O = glycolate + phosphate. Functionally, catalyzes the dephosphorylation of 2-phosphoglycolate. The sequence is that of Phosphoglycolate phosphatase from Picrophilus torridus (strain ATCC 700027 / DSM 9790 / JCM 10055 / NBRC 100828 / KAW 2/3).